A 260-amino-acid polypeptide reads, in one-letter code: Small ribosomal subunit protein uS2 (260 aa).

It belongs to the universal ribosomal protein uS2 family.

This is Small ribosomal subunit protein uS2 from Staphylococcus carnosus (strain TM300).